The primary structure comprises 705 residues: Polyribonucleotide nucleotidyltransferase (705 aa).

Mg(2+) is bound by residues D486 and D492. The 60-residue stretch at 553–612 (PQFHTMKVDPEKIRDIIGKGGATIRSITEETGASIDIDDDGTVKIYGDDGDSLQGAINRI) folds into the KH domain. Residues 622 to 690 (GEVYKGKVVR…QRGRIKLSIK (69 aa)) form the S1 motif domain.

It belongs to the polyribonucleotide nucleotidyltransferase family. In terms of assembly, component of the RNA degradosome, which is a multiprotein complex involved in RNA processing and mRNA degradation. Mg(2+) serves as cofactor.

It localises to the cytoplasm. The catalysed reaction is RNA(n+1) + phosphate = RNA(n) + a ribonucleoside 5'-diphosphate. Involved in mRNA degradation. Catalyzes the phosphorolysis of single-stranded polyribonucleotides processively in the 3'- to 5'-direction. In Teredinibacter turnerae (strain ATCC 39867 / T7901), this protein is Polyribonucleotide nucleotidyltransferase.